A 387-amino-acid chain; its full sequence is Thermostable celloxylanase (387 aa).

Residues 41–382 (AEDIPSLAEA…KPAFWAIVDP (342 aa)) form the GH10 domain. The active-site Proton donor is the glutamate 185. The active-site Nucleophile is glutamate 293.

It belongs to the glycosyl hydrolase 10 (cellulase F) family.

It carries out the reaction Endohydrolysis of (1-&gt;4)-beta-D-glucosidic linkages in cellulose, lichenin and cereal beta-D-glucans.. The catalysed reaction is Endohydrolysis of (1-&gt;4)-beta-D-xylosidic linkages in xylans.. It participates in glycan degradation; xylan degradation. Functionally, active toward xylan, carboxymethylcellulose, P-nitrophenyl-beta-D-xylopyranoside and P-nitrophenyl-beta-D-cellobioside. The sequence is that of Thermostable celloxylanase (xynB) from Thermoclostridium stercorarium (Clostridium stercorarium).